The following is a 633-amino-acid chain: MTSTHADKTGDVASRTGFVGLVVGAIGVVYGDIGTSPLYAFREALRPFTADGVHEFEVIGLISLMIWTLTIIVTFKYVLFLLRADNDGEGGTLSLLALLMKKMGRNVPVLFFAGLIGSALFIGDAMITPALSVMSALEGLKLITPAFAEYVPPLSAAIMIVLFAAQSRGTAAVSMFFGPITVLWFFAMAAGGVIHIGDDWRILAAINPINALSFLAHAGTVGLIVLGAVFLTVTGAEALYADLGHFGRRPIQMAWFVLVFPALLLNYLGQGALVLSQPAASADPFFLMYPDWALLPVVLLATLATIIASQAVITGAFSLARQAVHLGFLPRLRIKFTSETNTGQIYVPSVNLLLLTGVLMLIFSFGDSESLATAYGISVTGAMVITTMLAFQFLRAVWGYSFMLASAALLPLFVIEVVFLAANLLKIQDGGWVPVALALAIMTLMWTWTRGQTYLKKLRANNEIPLDSFIRSIERKSDHSPVTVPGTAVFLTSVPDRTPNVLLHNLKHNHVLHEQNVILTVWTEDEPYVPDNRRIKISQLSPRFVRLDINFGFMDDPDVTRALALCREGGFKFEIMKTSFYLGRRNLVRTPNTGLPGWQERIFMALEGFAIDPSDYFNLPSNRVVELGEQVAI.

A run of 12 helical transmembrane segments spans residues 18 to 38 (FVGL…TSPL), 61 to 81 (LISL…VLFL), 107 to 127 (VPVL…DAMI), 143 to 163 (ITPA…IVLF), 176 to 196 (FFGP…VIHI), 211 to 231 (ALSF…AVFL), 255 to 275 (WFVL…ALVL), 293 to 313 (ALLP…QAVI), 345 to 365 (IYVP…IFSF), 371 to 391 (LATA…MLAF), 402 to 422 (FMLA…FLAA), and 429 to 449 (DGGW…WTWT).

The protein belongs to the HAK/KUP transporter (TC 2.A.72) family.

It is found in the cell inner membrane. It catalyses the reaction K(+)(in) + H(+)(in) = K(+)(out) + H(+)(out). In terms of biological role, transport of potassium into the cell. Likely operates as a K(+):H(+) symporter. This Rhizobium etli (strain ATCC 51251 / DSM 11541 / JCM 21823 / NBRC 15573 / CFN 42) protein is Probable potassium transport system protein Kup 2.